We begin with the raw amino-acid sequence, 241 residues long: Large ribosomal subunit protein uL1 (241 aa).

The protein belongs to the universal ribosomal protein uL1 family. In terms of assembly, part of the 50S ribosomal subunit.

Binds directly to 23S rRNA. The L1 stalk is quite mobile in the ribosome, and is involved in E site tRNA release. Its function is as follows. Protein L1 is also a translational repressor protein, it controls the translation of the L11 operon by binding to its mRNA. The protein is Large ribosomal subunit protein uL1 of Streptomyces avermitilis (strain ATCC 31267 / DSM 46492 / JCM 5070 / NBRC 14893 / NCIMB 12804 / NRRL 8165 / MA-4680).